Reading from the N-terminus, the 166-residue chain is Cyclic pyranopterin monophosphate synthase (166 aa).

Residues 83 to 85 (LCH) and 121 to 122 (ME) each bind substrate. Residue Asp-136 is part of the active site.

It belongs to the MoaC family. Homohexamer; trimer of dimers.

It carries out the reaction (8S)-3',8-cyclo-7,8-dihydroguanosine 5'-triphosphate = cyclic pyranopterin phosphate + diphosphate. The protein operates within cofactor biosynthesis; molybdopterin biosynthesis. Catalyzes the conversion of (8S)-3',8-cyclo-7,8-dihydroguanosine 5'-triphosphate to cyclic pyranopterin monophosphate (cPMP). This Rhodospirillum rubrum (strain ATCC 11170 / ATH 1.1.1 / DSM 467 / LMG 4362 / NCIMB 8255 / S1) protein is Cyclic pyranopterin monophosphate synthase.